The sequence spans 52 residues: Insulin (52 aa).

Disulfide bonds link cysteine 7–cysteine 38, cysteine 19–cysteine 51, and cysteine 37–cysteine 42.

This sequence belongs to the insulin family. Heterodimer of a B chain and an A chain linked by two disulfide bonds.

It localises to the secreted. Its function is as follows. Insulin decreases blood glucose concentration. It increases cell permeability to monosaccharides, amino acids and fatty acids. It accelerates glycolysis, the pentose phosphate cycle, and glycogen synthesis in liver. This is Insulin (ins) from Acipenser gueldenstaedtii (Russian sturgeon).